A 187-amino-acid polypeptide reads, in one-letter code: UPF0301 protein YqgE (187 aa).

It belongs to the UPF0301 (AlgH) family.

The sequence is that of UPF0301 protein YqgE from Salmonella paratyphi A (strain ATCC 9150 / SARB42).